The chain runs to 1000 residues: Probable coatomer subunit beta' (1000 aa).

WD repeat units lie at residues 13 to 52 (ARSD…LVKS), 55 to 94 (VCDV…RVHQ), 97 to 136 (AHSD…AMKQ), 140 to 180 (GHTH…PNFT), 183 to 224 (GHEK…CVQT), 227 to 266 (GHAQ…LETT), and 351 to 391 (LGSS…NKDF). Residues 863 to 1000 (PRQTETQLKA…MDDLNLDEED (138 aa)) form a disordered region. Residues 901–915 (EPEEEEEQEEFDDDQ) are compositionally biased toward acidic residues. Low complexity predominate over residues 960–969 (SASSQQSAQD). Residues 970–1000 (FQDDTQWSDEDFGDAENGDLNMDDLNLDEED) show a composition bias toward acidic residues.

It belongs to the WD repeat COPB2 family. Oligomeric complex that consists of at least the alpha, beta, beta', gamma, delta, epsilon and zeta subunits.

Its subcellular location is the cytoplasm. It is found in the golgi apparatus membrane. The protein localises to the cytoplasmic vesicle. It localises to the COPI-coated vesicle membrane. Functionally, the coatomer is a cytosolic protein complex that binds to dilysine motifs and reversibly associates with Golgi non-clathrin-coated vesicles, which further mediate biosynthetic protein transport from the ER, via the Golgi up to the trans Golgi network. Coatomer complex is required for budding from Golgi membranes, and is essential for the retrograde Golgi-to-ER transport of dilysine-tagged proteins. This Caenorhabditis elegans protein is Probable coatomer subunit beta' (copb-2).